A 553-amino-acid polypeptide reads, in one-letter code: Solute carrier family 2, facilitated glucose transporter member 10 (553 aa).

Topologically, residues 1–15 (MGLRSTTLVLAATSS) are cytoplasmic. A helical membrane pass occupies residues 16–36 (LLGGLIFGYELGIISGALLML). Residues 37–48 (KTVFQLTCFEQE) are Extracellular-facing. The chain crosses the membrane as a helical span at residues 49–69 (ALVSAVLFGALLASLIGGFII). Over 70-82 (DRSGRRTSIMGSN) the chain is Cytoplasmic. Residues 83-103 (LVVLAGSIILIATSSFWWLVV) traverse the membrane as a helical segment. Topologically, residues 104-105 (GR) are extracellular. The helical transmembrane segment at 106 to 126 (VTVGFAISISSMACCIYVSEI) threads the bilayer. The Cytoplasmic segment spans residues 127–132 (VRPHQR). Residues 133 to 153 (GTLVSLYETGITVGILISYAM) traverse the membrane as a helical segment. Residues 154-165 (NYFLSAVNDGWK) lie on the Extracellular side of the membrane. A helical transmembrane segment spans residues 166–186 (YMFGLAIIPAAFQFIVILFLP). Over 187–240 (SKPHTLNFWEQDSDNGFIELEEAGESGEFKPDTYDKQYTFLDLFRSKDNMRTRT) the chain is Cytoplasmic. The helical transmembrane segment at 241 to 261 (LLGLGLVLFQQFTGQPNVLYY) threads the bilayer. Residue 250–251 (QQ) participates in D-glucose binding. Topologically, residues 262-277 (ASTIFRSVGFQSNSSA) are extracellular. The N-linked (GlcNAc...) asparagine glycan is linked to Asn-274. A helical membrane pass occupies residues 278-298 (VLASVGLGVVKVASTLIAICF). Topologically, residues 299 to 305 (ADKAGRR) are cytoplasmic. A helical membrane pass occupies residues 306–326 (ILLLAGCIVMTIAISGIGIVS). Over 327 to 413 (FMVELDSHRD…PPAGPDSNYA (87 aa)) the chain is Extracellular. N-linked (GlcNAc...) asparagine glycosylation is found at Asn-344, Asn-351, and Asn-400. A helical transmembrane segment spans residues 414–434 (ILNWITLLSMMAFVSAFSIGF). Residues 435–462 (GPMTWLVLSEIYPADIRGRAFAFCNSFN) are Cytoplasmic-facing. Trp-439 contributes to the D-glucose binding site. A helical membrane pass occupies residues 463-482 (WAANLLITLTFLEVIGSIGL). Position 483 (Gly-483) is a topological domain, extracellular. Residues 484–504 (WTFLLYGGVGLLAIAFIYFFI) traverse the membrane as a helical segment. At 505 to 553 (PETKGQSLEEIDQQLSSKRISKRRETSKGVRKRPSTGPPYQRVGKSNWT) the chain is on the cytoplasmic side. The disordered stretch occupies residues 522–553 (KRISKRRETSKGVRKRPSTGPPYQRVGKSNWT).

It belongs to the major facilitator superfamily. Sugar transporter (TC 2.A.1.1) family. Glucose transporter subfamily.

Its subcellular location is the endomembrane system. It is found in the cytoplasm. It localises to the perinuclear region. It carries out the reaction D-glucose(out) = D-glucose(in). Facilitative glucose transporter required for the development of the cardiovascular system. The polypeptide is Solute carrier family 2, facilitated glucose transporter member 10 (Xenopus laevis (African clawed frog)).